The sequence spans 323 residues: NADH-cytochrome b5 reductase 2 (323 aa).

Residues 30 to 46 (LAPIYTAVGLTGLSVGL) form a helical membrane-spanning segment. An FAD-binding FR-type domain is found at 72–177 (QGWVDLKLSE…KGPLPKYQWE (106 aa)). FAD is bound at residue 180-215 (KHEHIALIAGGTGITPMYQLIRQIFKNPDDKTKVTL).

The protein belongs to the flavoprotein pyridine nucleotide cytochrome reductase family. It depends on FAD as a cofactor.

It is found in the mitochondrion outer membrane. It carries out the reaction 2 Fe(III)-[cytochrome b5] + NADH = 2 Fe(II)-[cytochrome b5] + NAD(+) + H(+). Its function is as follows. May mediate the reduction of outer membrane cytochrome b5. The sequence is that of NADH-cytochrome b5 reductase 2 (mcr1) from Aspergillus oryzae (strain ATCC 42149 / RIB 40) (Yellow koji mold).